A 179-amino-acid polypeptide reads, in one-letter code: Large ribosomal subunit protein uL6 (179 aa).

It belongs to the universal ribosomal protein uL6 family. As to quaternary structure, part of the 50S ribosomal subunit.

In terms of biological role, this protein binds to the 23S rRNA, and is important in its secondary structure. It is located near the subunit interface in the base of the L7/L12 stalk, and near the tRNA binding site of the peptidyltransferase center. The chain is Large ribosomal subunit protein uL6 from Chlorobium luteolum (strain DSM 273 / BCRC 81028 / 2530) (Pelodictyon luteolum).